A 348-amino-acid chain; its full sequence is Sulfate/thiosulfate import ATP-binding protein CysA (348 aa).

In terms of domain architecture, ABC transporter spans 3-237 (IRIQELCKQF…PSSPFVYSFV (235 aa)). 35 to 42 (GPSGSGKT) provides a ligand contact to ATP.

The protein belongs to the ABC transporter superfamily. Sulfate/tungstate importer (TC 3.A.1.6) family. The complex is composed of two ATP-binding proteins (CysA), two transmembrane proteins (CysT and CysW) and a solute-binding protein (CysP).

It is found in the cell inner membrane. It carries out the reaction sulfate(out) + ATP + H2O = sulfate(in) + ADP + phosphate + H(+). The catalysed reaction is thiosulfate(out) + ATP + H2O = thiosulfate(in) + ADP + phosphate + H(+). Functionally, part of the ABC transporter complex CysAWTP involved in sulfate/thiosulfate import. Responsible for energy coupling to the transport system. The protein is Sulfate/thiosulfate import ATP-binding protein CysA of Xylella fastidiosa (strain 9a5c).